A 502-amino-acid chain; its full sequence is Glycerol kinase (502 aa).

An ADP-binding site is contributed by T14. T14, T15, and S16 together coordinate ATP. T14 provides a ligand contact to sn-glycerol 3-phosphate. R18 is an ADP binding site. Residues R84, E85, Y137, and D247 each coordinate sn-glycerol 3-phosphate. Residues R84, E85, Y137, D247, and Q248 each contribute to the glycerol site. 2 residues coordinate ADP: T269 and G312. ATP-binding residues include T269, G312, Q316, and G413. The ADP site is built by G413 and N417.

The protein belongs to the FGGY kinase family. As to quaternary structure, homotetramer and homodimer (in equilibrium). Heterodimer with EIIA-Glc. Binds 1 zinc ion per glycerol kinase EIIA-Glc dimer. The zinc ion is important for dimerization.

The catalysed reaction is glycerol + ATP = sn-glycerol 3-phosphate + ADP + H(+). It functions in the pathway polyol metabolism; glycerol degradation via glycerol kinase pathway; sn-glycerol 3-phosphate from glycerol: step 1/1. With respect to regulation, activity of this regulatory enzyme is affected by several metabolites. Allosterically and non-competitively inhibited by fructose 1,6-bisphosphate (FBP) and unphosphorylated phosphocarrier protein EIIA-Glc (III-Glc), an integral component of the bacterial phosphotransferase (PTS) system. In terms of biological role, key enzyme in the regulation of glycerol uptake and metabolism. Catalyzes the phosphorylation of glycerol to yield sn-glycerol 3-phosphate. This is Glycerol kinase from Photorhabdus laumondii subsp. laumondii (strain DSM 15139 / CIP 105565 / TT01) (Photorhabdus luminescens subsp. laumondii).